The chain runs to 156 residues: ATP synthase subunit b (156 aa).

Residues 11 to 31 form a helical membrane-spanning segment; it reads LIAFALFVWFCMKFVWPPIIN.

The protein belongs to the ATPase B chain family. In terms of assembly, F-type ATPases have 2 components, F(1) - the catalytic core - and F(0) - the membrane proton channel. F(1) has five subunits: alpha(3), beta(3), gamma(1), delta(1), epsilon(1). F(0) has three main subunits: a(1), b(2) and c(10-14). The alpha and beta chains form an alternating ring which encloses part of the gamma chain. F(1) is attached to F(0) by a central stalk formed by the gamma and epsilon chains, while a peripheral stalk is formed by the delta and b chains.

The protein localises to the cell inner membrane. Its function is as follows. F(1)F(0) ATP synthase produces ATP from ADP in the presence of a proton or sodium gradient. F-type ATPases consist of two structural domains, F(1) containing the extramembraneous catalytic core and F(0) containing the membrane proton channel, linked together by a central stalk and a peripheral stalk. During catalysis, ATP synthesis in the catalytic domain of F(1) is coupled via a rotary mechanism of the central stalk subunits to proton translocation. Functionally, component of the F(0) channel, it forms part of the peripheral stalk, linking F(1) to F(0). The sequence is that of ATP synthase subunit b from Haemophilus influenzae (strain PittEE).